Reading from the N-terminus, the 164-residue chain is MPSFDISSEVDMVALKNAVDVAGRQIANRYDFKGTSASIELNEKDGLITLHGDSDFQLDQIKAILLPAMEKKEADSAKRLDHQDVQKISGNKVKQVLKIKAGIDAELAKKIVRLLKDSGLKVQASIQGDEVRVTGAKRDVLQEVIAFVRKSITDFPLQFGNFRD.

The protein belongs to the YajQ family.

In terms of biological role, nucleotide-binding protein. This is Nucleotide-binding protein Mfla_1706 from Methylobacillus flagellatus (strain ATCC 51484 / DSM 6875 / VKM B-1610 / KT).